Here is a 272-residue protein sequence, read N- to C-terminus: WIMGHMVNDLSLVDEFLNDGANSLELDVEFSSSGTAQRTHHGFPCDCFRYCTNSEKFSTYLDYIRQLTTPGNSKFQSRLILLVMDLKLNPLSSSAAYNAGADVALNLLNHYWQRGESEARAYIVLSLSTIGGAEFISGFKSTMEKEGFADKYYDKIGWDFSGNEDLQQIRDVLENYGIREHIWQGDGITNCLPRGDSRLKEALNLRYSPSYIYADKVYTWSIDEENSIKHALWLGVDGVMTNHPERVIEVLGKSKYSDKFRLATYDDNPWEK.

The active site involves His5. Positions 25 and 27 each coordinate Mg(2+). His41 acts as the Nucleophile in catalysis. Disulfide bonds link Cys45–Cys51 and Cys47–Cys191. Asp85 contributes to the Mg(2+) binding site.

It belongs to the arthropod phospholipase D family. Class II subfamily. The cofactor is Mg(2+). Expressed by the venom gland.

The protein resides in the secreted. It catalyses the reaction an N-(acyl)-sphingosylphosphocholine = an N-(acyl)-sphingosyl-1,3-cyclic phosphate + choline. The catalysed reaction is an N-(acyl)-sphingosylphosphoethanolamine = an N-(acyl)-sphingosyl-1,3-cyclic phosphate + ethanolamine. It carries out the reaction a 1-acyl-sn-glycero-3-phosphocholine = a 1-acyl-sn-glycero-2,3-cyclic phosphate + choline. The enzyme catalyses a 1-acyl-sn-glycero-3-phosphoethanolamine = a 1-acyl-sn-glycero-2,3-cyclic phosphate + ethanolamine. In terms of biological role, dermonecrotic toxins cleave the phosphodiester linkage between the phosphate and headgroup of certain phospholipids (sphingolipid and lysolipid substrates), forming an alcohol (often choline) and a cyclic phosphate. This toxin acts on sphingomyelin (SM). It may also act on ceramide phosphoethanolamine (CPE), lysophosphatidylcholine (LPC) and lysophosphatidylethanolamine (LPE), but not on lysophosphatidylserine (LPS), and lysophosphatidylglycerol (LPG). It acts by transphosphatidylation, releasing exclusively cyclic phosphate products as second products. Induces dermonecrosis, hemolysis, increased vascular permeability, edema, inflammatory response, and platelet aggregation. This chain is Dermonecrotic toxin SpeSicTox-betaIB1a, found in Sicarius peruensis (Six-eyed sand spider).